Consider the following 506-residue polypeptide: Bifunctional purine biosynthesis protein PurH (506 aa).

The MGS-like domain occupies 1–146; that stretch reads MARLALLSVS…KNFAHLTVLC (146 aa).

Belongs to the PurH family.

The catalysed reaction is (6R)-10-formyltetrahydrofolate + 5-amino-1-(5-phospho-beta-D-ribosyl)imidazole-4-carboxamide = 5-formamido-1-(5-phospho-D-ribosyl)imidazole-4-carboxamide + (6S)-5,6,7,8-tetrahydrofolate. It catalyses the reaction IMP + H2O = 5-formamido-1-(5-phospho-D-ribosyl)imidazole-4-carboxamide. Its pathway is purine metabolism; IMP biosynthesis via de novo pathway; 5-formamido-1-(5-phospho-D-ribosyl)imidazole-4-carboxamide from 5-amino-1-(5-phospho-D-ribosyl)imidazole-4-carboxamide (10-formyl THF route): step 1/1. It participates in purine metabolism; IMP biosynthesis via de novo pathway; IMP from 5-formamido-1-(5-phospho-D-ribosyl)imidazole-4-carboxamide: step 1/1. In Nostoc sp. (strain PCC 7120 / SAG 25.82 / UTEX 2576), this protein is Bifunctional purine biosynthesis protein PurH.